The primary structure comprises 458 residues: Phosphomethylpyrimidine synthase (458 aa).

Residues N80, M109, Y139, H175, 195–197, 236–239, and E275 each bind substrate; these read SRG and DSLR. Residue H279 participates in Zn(2+) binding. Y302 contacts substrate. Residue H343 coordinates Zn(2+). Positions 423, 426, and 431 each coordinate [4Fe-4S] cluster.

It belongs to the ThiC family. [4Fe-4S] cluster is required as a cofactor.

The catalysed reaction is 5-amino-1-(5-phospho-beta-D-ribosyl)imidazole + S-adenosyl-L-methionine = 4-amino-2-methyl-5-(phosphooxymethyl)pyrimidine + CO + 5'-deoxyadenosine + formate + L-methionine + 3 H(+). It functions in the pathway cofactor biosynthesis; thiamine diphosphate biosynthesis. Functionally, catalyzes the synthesis of the hydroxymethylpyrimidine phosphate (HMP-P) moiety of thiamine from aminoimidazole ribotide (AIR) in a radical S-adenosyl-L-methionine (SAM)-dependent reaction. The chain is Phosphomethylpyrimidine synthase from Acaryochloris marina (strain MBIC 11017).